The chain runs to 73 residues: Putative antitoxin M1627_0365 (73 aa).

Belongs to the UPF0330 family.

Its function is as follows. Possibly the antitoxin component of a type II toxin-antitoxin (TA) system. The protein is Putative antitoxin M1627_0365 of Saccharolobus islandicus (strain M.16.27) (Sulfolobus islandicus).